Here is a 335-residue protein sequence, read N- to C-terminus: Cobalt-precorrin-5B C(1)-methyltransferase (335 aa).

The protein belongs to the CbiD family.

The catalysed reaction is Co-precorrin-5B + S-adenosyl-L-methionine = Co-precorrin-6A + S-adenosyl-L-homocysteine. It participates in cofactor biosynthesis; adenosylcobalamin biosynthesis; cob(II)yrinate a,c-diamide from sirohydrochlorin (anaerobic route): step 6/10. Catalyzes the methylation of C-1 in cobalt-precorrin-5B to form cobalt-precorrin-6A. This is Cobalt-precorrin-5B C(1)-methyltransferase from Methanospirillum hungatei JF-1 (strain ATCC 27890 / DSM 864 / NBRC 100397 / JF-1).